We begin with the raw amino-acid sequence, 478 residues long: Protein nucleotidyltransferase YdiU (478 aa).

ATP contacts are provided by G84, G86, R87, K107, D119, G120, R170, and R177. D246 serves as the catalytic Proton acceptor. N247 and D256 together coordinate Mg(2+). D256 serves as a coordination point for ATP.

This sequence belongs to the SELO family. Mg(2+) serves as cofactor. Requires Mn(2+) as cofactor.

The catalysed reaction is L-seryl-[protein] + ATP = 3-O-(5'-adenylyl)-L-seryl-[protein] + diphosphate. It carries out the reaction L-threonyl-[protein] + ATP = 3-O-(5'-adenylyl)-L-threonyl-[protein] + diphosphate. The enzyme catalyses L-tyrosyl-[protein] + ATP = O-(5'-adenylyl)-L-tyrosyl-[protein] + diphosphate. It catalyses the reaction L-histidyl-[protein] + UTP = N(tele)-(5'-uridylyl)-L-histidyl-[protein] + diphosphate. The catalysed reaction is L-seryl-[protein] + UTP = O-(5'-uridylyl)-L-seryl-[protein] + diphosphate. It carries out the reaction L-tyrosyl-[protein] + UTP = O-(5'-uridylyl)-L-tyrosyl-[protein] + diphosphate. Its function is as follows. Nucleotidyltransferase involved in the post-translational modification of proteins. It can catalyze the addition of adenosine monophosphate (AMP) or uridine monophosphate (UMP) to a protein, resulting in modifications known as AMPylation and UMPylation. This is Protein nucleotidyltransferase YdiU from Escherichia coli O157:H7.